A 551-amino-acid polypeptide reads, in one-letter code: ATP synthase subunit alpha, mitochondrial (551 aa).

Position 210-217 (210-217) interacts with ATP; sequence GDRQTGKT.

This sequence belongs to the ATPase alpha/beta chains family. In terms of assembly, F-type ATPases have 2 components, CF(1) - the catalytic core - and CF(0) - the membrane proton channel. CF(1) has five subunits: alpha(3), beta(3), gamma(1), delta(1), epsilon(1). CF(0) has three main subunits: a, b and c.

It is found in the mitochondrion. It localises to the mitochondrion inner membrane. Its function is as follows. Mitochondrial membrane ATP synthase (F(1)F(0) ATP synthase or Complex V) produces ATP from ADP in the presence of a proton gradient across the membrane which is generated by electron transport complexes of the respiratory chain. F-type ATPases consist of two structural domains, F(1) - containing the extramembraneous catalytic core, and F(0) - containing the membrane proton channel, linked together by a central stalk and a peripheral stalk. During catalysis, ATP synthesis in the catalytic domain of F(1) is coupled via a rotary mechanism of the central stalk subunits to proton translocation. Subunits alpha and beta form the catalytic core in F(1). Rotation of the central stalk against the surrounding alpha(3)beta(3) subunits leads to hydrolysis of ATP in three separate catalytic sites on the beta subunits. Subunit alpha does not bear the catalytic high-affinity ATP-binding sites. The polypeptide is ATP synthase subunit alpha, mitochondrial (atp-1) (Neurospora crassa (strain ATCC 24698 / 74-OR23-1A / CBS 708.71 / DSM 1257 / FGSC 987)).